We begin with the raw amino-acid sequence, 438 residues long: MADYQDKNVVIIGLGLTGLSCVDFFLARGVTPRVMDTRVTPPGLDKLPQEVERHVGGLNDEWLLAADLIVASPGIALAHPSLSAAASAGVEIVGDIELFCREAQAPIVAITGSNGKSTVTTLVGEMAKAAGVNVGVGGNIGLPALMLLDADRELYVLELSSFQLETTSSLQAAAATVLNVTEDHMDRYPFGLQQYRAAKLRVYEKAKVCVVNADDALTMPVRGADERCVSFGVNMGDYHLNRQQGETWLRVKGEKVLNVKEMKLSGQHNYTNALAALALADAVGLPRASSLKALTTFTGLAHRFQLALEHNGVRWINDSKATNVGSTEAALNGLHVDGTLHLLLGGDGKSADFSPLTRYLTGDRIRLYCFGRDGAQLAALRPEIAQQTETMEEAMRLLAPRVQPGDMVLLSPACASLDQFKNFEQRGDVFTRLAKELG.

ATP is bound at residue 112 to 118 (GSNGKST).

The protein belongs to the MurCDEF family.

The protein resides in the cytoplasm. The catalysed reaction is UDP-N-acetyl-alpha-D-muramoyl-L-alanine + D-glutamate + ATP = UDP-N-acetyl-alpha-D-muramoyl-L-alanyl-D-glutamate + ADP + phosphate + H(+). It functions in the pathway cell wall biogenesis; peptidoglycan biosynthesis. In terms of biological role, cell wall formation. Catalyzes the addition of glutamate to the nucleotide precursor UDP-N-acetylmuramoyl-L-alanine (UMA). This chain is UDP-N-acetylmuramoylalanine--D-glutamate ligase, found in Salmonella typhimurium (strain LT2 / SGSC1412 / ATCC 700720).